We begin with the raw amino-acid sequence, 285 residues long: Sulfotransferase 2A1 (285 aa).

Residues lysine 44, serine 45, glycine 46, threonine 47, asparagine 48, and tryptophan 49 each contribute to the 3'-phosphoadenylyl sulfate site. Residue histidine 99 is the Proton acceptor of the active site. 3'-phosphoadenylyl sulfate contacts are provided by arginine 121, serine 129, tyrosine 184, serine 218, methionine 223, arginine 247, lysine 248, and glycine 249.

This sequence belongs to the sulfotransferase 1 family. As to quaternary structure, homodimer. Highly expressed in liver.

The protein resides in the cytoplasm. It catalyses the reaction an alcohol + 3'-phosphoadenylyl sulfate = an alkyl sulfate + adenosine 3',5'-bisphosphate + H(+). The enzyme catalyses taurolithocholate + 3'-phosphoadenylyl sulfate = taurolithocholate 3-sulfate + adenosine 3',5'-bisphosphate + H(+). It carries out the reaction pregnenolone + 3'-phosphoadenylyl sulfate = pregnenolone sulfate + adenosine 3',5'-bisphosphate + H(+). The catalysed reaction is 3beta-hydroxyandrost-5-en-17-one + 3'-phosphoadenylyl sulfate = dehydroepiandrosterone 3-sulfate + adenosine 3',5'-bisphosphate + H(+). It catalyses the reaction lithocholate + 3'-phosphoadenylyl sulfate = lithocholate sulfate + adenosine 3',5'-bisphosphate + H(+). The enzyme catalyses (24S)-hydroxycholesterol + 3'-phosphoadenylyl sulfate = (24S)-hydroxycholesterol 24-sulfate + adenosine 3',5'-bisphosphate + H(+). It carries out the reaction (24S)-hydroxycholesterol + 3'-phosphoadenylyl sulfate = (24S)-hydroxycholesterol 3-sulfate + adenosine 3',5'-bisphosphate + H(+). The catalysed reaction is (24S)-hydroxycholesterol 24-sulfate + 3'-phosphoadenylyl sulfate = (24S)-hydroxycholesterol 3,24-disulfate + adenosine 3',5'-bisphosphate + H(+). It catalyses the reaction androsterone + 3'-phosphoadenylyl sulfate = androsterone 3alpha-sulfate + adenosine 3',5'-bisphosphate + H(+). Sulfotransferase that utilizes 3'-phospho-5'-adenylyl sulfate (PAPS) as sulfonate donor to catalyze the sulfonation of steroids and bile acids in the liver and adrenal glands. Mediates the sulfation of a wide range of steroids and sterols, including pregnenolone, androsterone, DHEA, bile acids, cholesterol and as well many xenobiotics that contain alcohol and phenol functional groups. Sulfonation increases the water solubility of most compounds, and therefore their renal excretion, but it can also result in bioactivation to form active metabolites. Plays an important role in maintening steroid and lipid homeostasis. Plays a key role in bile acid metabolism. In addition, catalyzes the metabolic activation of potent carcinogenic polycyclic arylmethanols. This is Sulfotransferase 2A1 (Sult2a1) from Mus musculus (Mouse).